The sequence spans 593 residues: Immunoglobulin G-binding protein G (593 aa).

The N-terminal stretch at 1–33 (MEKEKKVKYFLRKSAFGLASVSAAFLVGSTVFA) is a signal peptide. 5 repeat units span residues 104 to 140 (LAKAKADALKEFNKYGVSDYYKNLINNAKTVEGVKDL), 179 to 215 (LAEAKVLANRELDKYGVSDYHKNLINNAKTVEGVKDL), 254 to 290 (LAEAKVLANRELDKYGVSDYYKNLINNAKTVEGVKAL), 303 to 357 (TYKL…TVTE), and 373 to 427 (TYKL…TVTE). The segment at 104–290 (LAKAKADALK…AKTVEGVKAL (187 aa)) is 3 X 37 AA repeats. Residues 303–427 (TYKLILNGKT…DATKTFTVTE (125 aa)) form a 2 X 55 AA repeats region. The disordered stretch occupies residues 503–567 (PGDAPTEPEK…TLPTTGEGSN (65 aa)). Residues 529-557 (AKDDAKKDDTKKEDAKKPEAKKEDAKKAE) show a composition bias toward basic and acidic residues. Positions 531–555 (DDAKKDDTKKEDAKKPEAKKEDAKK) are 5 X 5 AA repeats of [DE]-D-A-K-K. The LPXTG sorting signal signature appears at 559–563 (LPTTG). T562 is modified (pentaglycyl murein peptidoglycan amidated threonine). Residues 563–593 (GEGSNPFFTAAALAVMAGAGALAVASKRKED) constitute a propeptide, removed by sortase.

It is found in the secreted. The protein localises to the cell wall. This is Immunoglobulin G-binding protein G (spg) from Streptococcus sp. group G.